We begin with the raw amino-acid sequence, 251 residues long: MSGHSKWATTKHKKAAIDAKRGKLFAKLIKNIEIAARQGGGDPDGNPALYDAIYKAKKASMPADNIKRAVARGSGAEAGGANYEEIIYEGYAPAGVGLIIECLTDNRNRAAADVRSTLGKGGGSLATNGAVSFNFERKGEIVVPSEGLDFDDLFEKAAEAGAEDVIDDGDTYTVVTAPSDLITVRQALQDAGVDYDSADLVMRPKNEIELGLDDARKVSKLIDNLDDLDDVQNIYSNWTASDDVLAQLDEE.

It belongs to the TACO1 family.

The protein localises to the cytoplasm. In Bifidobacterium animalis subsp. lactis (strain AD011), this protein is Probable transcriptional regulatory protein BLA_1344.